The sequence spans 570 residues: Sulfite reductase [NADPH] hemoprotein beta-component (570 aa).

The [4Fe-4S] cluster site is built by cysteine 434, cysteine 440, cysteine 479, and cysteine 483. Cysteine 483 contributes to the siroheme binding site.

Belongs to the nitrite and sulfite reductase 4Fe-4S domain family. In terms of assembly, alpha(8)-beta(8). The alpha component is a flavoprotein, the beta component is a hemoprotein. Siroheme serves as cofactor. It depends on [4Fe-4S] cluster as a cofactor.

The catalysed reaction is hydrogen sulfide + 3 NADP(+) + 3 H2O = sulfite + 3 NADPH + 4 H(+). Its pathway is sulfur metabolism; hydrogen sulfide biosynthesis; hydrogen sulfide from sulfite (NADPH route): step 1/1. Its function is as follows. Component of the sulfite reductase complex that catalyzes the 6-electron reduction of sulfite to sulfide. This is one of several activities required for the biosynthesis of L-cysteine from sulfate. This Escherichia coli O7:K1 (strain IAI39 / ExPEC) protein is Sulfite reductase [NADPH] hemoprotein beta-component.